The primary structure comprises 284 residues: MEMO1 family protein YG5714_2180 (284 aa).

The protein belongs to the MEMO1 family.

This Saccharolobus islandicus (strain Y.G.57.14 / Yellowstone #1) (Sulfolobus islandicus) protein is MEMO1 family protein YG5714_2180.